The primary structure comprises 135 residues: P2Y purinoceptor 4 (135 aa).

The chain crosses the membrane as a helical span at residues 1–25 (VHFSSSVMVLLFGLPFLVTLVCYGL). At 26-49 (MALRLCRPLPGAGQSSSRLRSLRT) the chain is on the cytoplasmic side. Residues 50–72 (IAVVMTVFAVCLVPFHITRTIYY) traverse the membrane as a helical segment. At 73–90 (LARLLKADCQILNIVNVV) the chain is on the extracellular side. The chain crosses the membrane as a helical span at residues 91–112 (YKVTRPLASANSCLDPLLYLFT). At 113–135 (GDKYRHQLQRLCRVSAPQRRITA) the chain is on the cytoplasmic side.

The protein belongs to the G-protein coupled receptor 1 family. As to expression, expressed in brain, heart, stria vascularis and vestibular labyrinth.

It is found in the cell membrane. Functionally, receptor for ATP and UTP coupled to G-proteins that activate a phosphatidylinositol-calcium second messenger system. Not activated by UDP. This Meriones unguiculatus (Mongolian jird) protein is P2Y purinoceptor 4 (P2RY4).